The sequence spans 433 residues: N-lysine methyltransferase SMYD2 (433 aa).

Residues 7–241 (GGLERFCSPG…PGEEVFTSYI (235 aa)) enclose the SET domain. 17-19 (KGR) serves as a coordination point for S-adenosyl-L-methionine. Zn(2+)-binding residues include cysteine 52, cysteine 55, cysteine 65, cysteine 68, cysteine 74, cysteine 78, histidine 86, and cysteine 90. The MYND-type zinc finger occupies 52 to 90 (CEFCFARKEGLSKCGRCKQAFYCNVECQKEDWPMHKLEC). Residues histidine 137, 206-207 (NH), and 258-260 (YFF) contribute to the S-adenosyl-L-methionine site.

It belongs to the class V-like SAM-binding methyltransferase superfamily. As to quaternary structure, interacts with RNA polymerase II and HELZ. Interacts with SIN3A and HDAC1. Interacts (via MYND-type zinc finger) with EPB41L3. Interacts (via SET domain) with p53/TP53. Interacts with RB1 and HSP90AA1.

The protein resides in the cytoplasm. It localises to the cytosol. The protein localises to the nucleus. It catalyses the reaction L-lysyl(4)-[histone H3] + 3 S-adenosyl-L-methionine = N(6),N(6),N(6)-trimethyl-L-lysyl(4)-[histone H3] + 3 S-adenosyl-L-homocysteine + 3 H(+). It carries out the reaction L-lysyl-[protein] + S-adenosyl-L-methionine = N(6)-methyl-L-lysyl-[protein] + S-adenosyl-L-homocysteine + H(+). Functionally, protein-lysine N-methyltransferase that methylates both histones and non-histone proteins, including p53/TP53 and RB1. Specifically trimethylates histone H3 'Lys-4' (H3K4me3) in vivo. The activity requires interaction with HSP90alpha. Shows even higher methyltransferase activity on p53/TP53. Monomethylates 'Lys-370' of p53/TP53, leading to decreased DNA-binding activity and subsequent transcriptional regulation activity of p53/TP53. Monomethylates RB1 at 'Lys-860'. In Sus scrofa (Pig), this protein is N-lysine methyltransferase SMYD2 (SMYD2).